The primary structure comprises 439 residues: Xylose isomerase (439 aa).

Residues His-101 and Asp-104 contribute to the active site. Mg(2+) is bound by residues Glu-232, Glu-268, His-271, Asp-296, Asp-307, Asp-309, and Asp-339.

It belongs to the xylose isomerase family. As to quaternary structure, homotetramer. Mg(2+) is required as a cofactor.

It localises to the cytoplasm. It catalyses the reaction alpha-D-xylose = alpha-D-xylulofuranose. The polypeptide is Xylose isomerase (Yersinia enterocolitica serotype O:8 / biotype 1B (strain NCTC 13174 / 8081)).